The sequence spans 501 residues: Glutamyl-tRNA(Gln) amidotransferase subunit A (501 aa).

Active-site charge relay system residues include lysine 84 and serine 159. Serine 183 functions as the Acyl-ester intermediate in the catalytic mechanism.

Belongs to the amidase family. GatA subfamily. In terms of assembly, heterotrimer of A, B and C subunits.

It catalyses the reaction L-glutamyl-tRNA(Gln) + L-glutamine + ATP + H2O = L-glutaminyl-tRNA(Gln) + L-glutamate + ADP + phosphate + H(+). Allows the formation of correctly charged Gln-tRNA(Gln) through the transamidation of misacylated Glu-tRNA(Gln) in organisms which lack glutaminyl-tRNA synthetase. The reaction takes place in the presence of glutamine and ATP through an activated gamma-phospho-Glu-tRNA(Gln). This is Glutamyl-tRNA(Gln) amidotransferase subunit A from Streptomyces avermitilis (strain ATCC 31267 / DSM 46492 / JCM 5070 / NBRC 14893 / NCIMB 12804 / NRRL 8165 / MA-4680).